Reading from the N-terminus, the 284-residue chain is Short-chain dehydrogenase RED1 (284 aa).

Positions 11, 37, 58, 86, 151, 155, 184, and 186 each coordinate NADP(+). The Proton acceptor role is filled by Y151. The active-site Lowers pKa of active site Tyr is the K155.

This sequence belongs to the short-chain dehydrogenases/reductases (SDR) family.

Its pathway is polyketide biosynthesis. Short-chain dehydrogenase; part of the gene cluster that mediates the biosynthesis of pyriculol and pyriculariol, two heptaketides that induce lesion formation upon application on rice leaves but are dispensable for pathogenicity. The highly reducing polyketide synthase synthesizes the heptaketide backbone of pyriculol and pyriculariol. Pyriculol and pyriculariol contain several hydroxyl moieties and double bonds, so it can be assumed that several reduction steps occur during biosynthesis. These reactions could be executed by PKS19 itself or partly by the tailoring enzymes OXR1, OXR2, RED1, RED2 or RED3, identified within the cluster. The FAD-linked oxidoreductase OXR1 is the only tailoring enzyme for which the function has been determined yet, and is involved in the oxidation of dihydropyriculol and dihydropyriculariol into pyriculol and pyriculariol, respectively. This chain is Short-chain dehydrogenase RED1, found in Pyricularia oryzae (strain 70-15 / ATCC MYA-4617 / FGSC 8958) (Rice blast fungus).